The chain runs to 206 residues: Apoptosis regulator OPG045 (206 aa).

The protein belongs to the orthopoxvirus OPG045 family. Homodimer. Interacts with host pro-apoptotic protein BCL2L11 (via BH3 domain). Interacts with host NLRP1. Interacts with host BAK.

It localises to the host mitochondrion outer membrane. Its subcellular location is the host cytoplasm. In terms of biological role, plays a role in evading host innate immune response by inhibiting host inflammasome activation. Interacts with and inhibits NLR-mediated interleukin-1 beta/IL1B production in infected cells. At the host mitochondria outer membrane, interacts with the BH3 domain of host BAK and prevents BAK from binding active BAX. In turn, host apoptosis is inhibited. This is Apoptosis regulator OPG045 (OPG045) from Vaccinia virus (strain L-IVP) (VACV).